Consider the following 260-residue polypeptide: Acetylglutamate kinase (260 aa).

Residues Gly46 to Gly47, Arg68, and Asn160 contribute to the substrate site.

Belongs to the acetylglutamate kinase family. ArgB subfamily.

The protein localises to the cytoplasm. It catalyses the reaction N-acetyl-L-glutamate + ATP = N-acetyl-L-glutamyl 5-phosphate + ADP. It participates in amino-acid biosynthesis; L-arginine biosynthesis; N(2)-acetyl-L-ornithine from L-glutamate: step 2/4. Catalyzes the ATP-dependent phosphorylation of N-acetyl-L-glutamate. This chain is Acetylglutamate kinase, found in Shewanella putrefaciens (strain CN-32 / ATCC BAA-453).